We begin with the raw amino-acid sequence, 488 residues long: 3-octaprenyl-4-hydroxybenzoate carboxy-lyase (488 aa).

N172 is a Mn(2+) binding site. Prenylated FMN contacts are provided by residues 175 to 177 (IYR), 189 to 191 (RWL), and 194 to 195 (RG). E238 is a binding site for Mn(2+). D287 serves as the catalytic Proton donor.

Belongs to the UbiD family. As to quaternary structure, homohexamer. The cofactor is prenylated FMN. Mn(2+) serves as cofactor.

It localises to the cell membrane. The enzyme catalyses a 4-hydroxy-3-(all-trans-polyprenyl)benzoate + H(+) = a 2-(all-trans-polyprenyl)phenol + CO2. Its pathway is cofactor biosynthesis; ubiquinone biosynthesis. In terms of biological role, catalyzes the decarboxylation of 3-octaprenyl-4-hydroxy benzoate to 2-octaprenylphenol, an intermediate step in ubiquinone biosynthesis. The polypeptide is 3-octaprenyl-4-hydroxybenzoate carboxy-lyase (Halorhodospira halophila (strain DSM 244 / SL1) (Ectothiorhodospira halophila (strain DSM 244 / SL1))).